Consider the following 433-residue polypeptide: Serine hydroxymethyltransferase (433 aa).

(6S)-5,6,7,8-tetrahydrofolate contacts are provided by residues Leu132 and 136–138 (GHL). Residue Lys241 is modified to N6-(pyridoxal phosphate)lysine.

The protein belongs to the SHMT family. In terms of assembly, homodimer. Pyridoxal 5'-phosphate is required as a cofactor.

Its subcellular location is the cytoplasm. The catalysed reaction is (6R)-5,10-methylene-5,6,7,8-tetrahydrofolate + glycine + H2O = (6S)-5,6,7,8-tetrahydrofolate + L-serine. It participates in one-carbon metabolism; tetrahydrofolate interconversion. Its pathway is amino-acid biosynthesis; glycine biosynthesis; glycine from L-serine: step 1/1. Functionally, catalyzes the reversible interconversion of serine and glycine with tetrahydrofolate (THF) serving as the one-carbon carrier. This reaction serves as the major source of one-carbon groups required for the biosynthesis of purines, thymidylate, methionine, and other important biomolecules. Also exhibits THF-independent aldolase activity toward beta-hydroxyamino acids, producing glycine and aldehydes, via a retro-aldol mechanism. The polypeptide is Serine hydroxymethyltransferase (Rhodopseudomonas palustris (strain HaA2)).